Here is a 378-residue protein sequence, read N- to C-terminus: Glutamate 5-kinase (378 aa).

Lysine 20 provides a ligand contact to ATP. Substrate-binding residues include serine 60, aspartate 147, and asparagine 159. Residues 179–180 and 221–227 each bind ATP; these read TD and TGGMLTK. The 79-residue stretch at 286–364 folds into the PUA domain; sequence RGRVVLDAGA…SQIARILGSM (79 aa).

The protein belongs to the glutamate 5-kinase family.

The protein localises to the cytoplasm. The catalysed reaction is L-glutamate + ATP = L-glutamyl 5-phosphate + ADP. Its pathway is amino-acid biosynthesis; L-proline biosynthesis; L-glutamate 5-semialdehyde from L-glutamate: step 1/2. Catalyzes the transfer of a phosphate group to glutamate to form L-glutamate 5-phosphate. The polypeptide is Glutamate 5-kinase (Bordetella petrii (strain ATCC BAA-461 / DSM 12804 / CCUG 43448)).